Here is a 126-residue protein sequence, read N- to C-terminus: Putative lipoprotein LprD (126 aa).

Residues 1-21 form the signal peptide; the sequence is MSTTRRRRPALIALVIIATCG. The N-palmitoyl cysteine moiety is linked to residue cysteine 22. A lipid anchor (S-diacylglycerol cysteine) is attached at cysteine 22. Residues 40–60 traverse the membrane as a helical segment; sequence FQNLGYALQWPLFAWFCVYAY. A disordered region spans residues 70 to 101; that stretch reads PPQPPTGGAAAEIPAGLLPERPKPAQQPPDDP.

It to M.leprae ML1177.

It is found in the cell membrane. In Mycobacterium tuberculosis (strain CDC 1551 / Oshkosh), this protein is Putative lipoprotein LprD (lprD).